Here is a 67-residue protein sequence, read N- to C-terminus: Large ribosomal subunit protein uL29 (67 aa).

It belongs to the universal ribosomal protein uL29 family.

The protein is Large ribosomal subunit protein uL29 of Heliobacterium modesticaldum (strain ATCC 51547 / Ice1).